Reading from the N-terminus, the 198-residue chain is Protein GrpE (198 aa).

It belongs to the GrpE family. Homodimer.

It localises to the cytoplasm. Participates actively in the response to hyperosmotic and heat shock by preventing the aggregation of stress-denatured proteins, in association with DnaK and GrpE. It is the nucleotide exchange factor for DnaK and may function as a thermosensor. Unfolded proteins bind initially to DnaJ; upon interaction with the DnaJ-bound protein, DnaK hydrolyzes its bound ATP, resulting in the formation of a stable complex. GrpE releases ADP from DnaK; ATP binding to DnaK triggers the release of the substrate protein, thus completing the reaction cycle. Several rounds of ATP-dependent interactions between DnaJ, DnaK and GrpE are required for fully efficient folding. The chain is Protein GrpE from Vibrio harveyi (Beneckea harveyi).